The following is a 375-amino-acid chain: Trichodiene synthase (375 aa).

This sequence belongs to the trichodiene synthase family.

The catalysed reaction is (2E,6E)-farnesyl diphosphate = trichodiene + diphosphate. The protein operates within sesquiterpene biosynthesis; trichothecene biosynthesis. TS is a member of the terpene cyclase group of enzymes. It catalyzes the isomerization and cyclization of farnesyl pyro-phosphate to form trichodiene, the first cyclic intermediate in the biosynthetic pathway for trichothecenes. It serves to branch trichothecene biosynthesis from the isoprenoid pathway. The chain is Trichodiene synthase (TRI5) from Fusarium asiaticum.